The following is a 287-amino-acid chain: Small ribosomal subunit protein uS2 (287 aa).

The segment at 235 to 287 is disordered; sequence ESGFATGGGDWEATAPAAASGWDDAAAQPQNWDSAAQGAASWDEAAAPKEGQW. Positions 247 to 261 are enriched in low complexity; the sequence is ATAPAAASGWDDAAA.

It belongs to the universal ribosomal protein uS2 family. Component of the small ribosomal subunit. Mature ribosomes consist of a small (40S) and a large (60S) subunit. The 40S subunit contains about 33 different proteins and 1 molecule of RNA (18S). The 60S subunit contains about 49 different proteins and 3 molecules of RNA (25S, 5.8S and 5S). Interacts with RPS21.

Its subcellular location is the cytoplasm. Required for the assembly and/or stability of the 40S ribosomal subunit. Required for the processing of the 20S rRNA-precursor to mature 18S rRNA in a late step of the maturation of 40S ribosomal subunits. In Pyricularia oryzae (strain 70-15 / ATCC MYA-4617 / FGSC 8958) (Rice blast fungus), this protein is Small ribosomal subunit protein uS2.